The chain runs to 488 residues: Probable malate:quinone oxidoreductase (488 aa).

Belongs to the MQO family. It depends on FAD as a cofactor.

It carries out the reaction (S)-malate + a quinone = a quinol + oxaloacetate. The protein operates within carbohydrate metabolism; tricarboxylic acid cycle; oxaloacetate from (S)-malate (quinone route): step 1/1. This Neisseria meningitidis serogroup C / serotype 2a (strain ATCC 700532 / DSM 15464 / FAM18) protein is Probable malate:quinone oxidoreductase.